A 437-amino-acid chain; its full sequence is AA9 family lytic polysaccharide monooxygenase H (437 aa).

Residues 1-21 (MNLSLFTLALVACYSSQLAAA) form the signal peptide. Histidine 22 is a Cu(2+) binding site. Cysteine 64 and cysteine 193 form a disulfide bridge. 2 N-linked (GlcNAc...) asparagine glycosylation sites follow: asparagine 67 and asparagine 79. Residue histidine 104 participates in Cu(2+) binding. 2 N-linked (GlcNAc...) asparagine glycosylation sites follow: asparagine 120 and asparagine 138. Positions 178 and 188 each coordinate O2. Cu(2+) is bound at residue tyrosine 190. Residues asparagine 252 and asparagine 307 are each glycosylated (N-linked (GlcNAc...) asparagine). The Chitin-binding type-1 domain maps to 392–437 (DGKCGDGNGQTCKGSLLGECCSQVGYCGSSESYCGVGCQGNFGVCG). 4 disulfide bridges follow: cysteine 395–cysteine 412, cysteine 403–cysteine 418, cysteine 411–cysteine 425, and cysteine 429–cysteine 436.

This sequence belongs to the polysaccharide monooxygenase AA9 family. The cofactor is Cu(2+).

The protein resides in the secreted. The enzyme catalyses [(1-&gt;4)-beta-D-glucosyl]n+m + reduced acceptor + O2 = 4-dehydro-beta-D-glucosyl-[(1-&gt;4)-beta-D-glucosyl]n-1 + [(1-&gt;4)-beta-D-glucosyl]m + acceptor + H2O.. In terms of biological role, lytic polysaccharide monooxygenase (LPMO) that depolymerizes crystalline and amorphous polysaccharides via the oxidation of scissile alpha- or beta-(1-4)-glycosidic bonds, yielding C1 and C4 oxidation products. Catalysis by LPMOs requires the reduction of the active-site copper from Cu(II) to Cu(I) by a reducing agent and H(2)O(2) or O(2) as a cosubstrate. This Botryotinia fuckeliana (strain B05.10) (Noble rot fungus) protein is AA9 family lytic polysaccharide monooxygenase H.